We begin with the raw amino-acid sequence, 334 residues long: Siroheme decarboxylase (334 aa).

The active site involves His-93.

This sequence belongs to the Ahb/Nir family.

The catalysed reaction is siroheme + 2 H(+) = 12,18-didecarboxysiroheme + 2 CO2. It functions in the pathway porphyrin-containing compound metabolism. In terms of biological role, involved in heme d1 biosynthesis. Catalyzes the decarboxylation of siroheme into didecarboxysiroheme. Siroheme is probably decarboxylated to monodecarboxysiroheme, which is in turn decarboxylated to didecarboxysiroheme. The sequence is that of Siroheme decarboxylase from Hydrogenobacter thermophilus (strain DSM 6534 / IAM 12695 / TK-6).